The chain runs to 582 residues: Inactive metallocarboxypeptidase ECM14 (582 aa).

The N-terminal stretch at 1–20 is a signal peptide; that stretch reads MHILQVITGATLVSVPFVSA. The propeptide occupies 21-172; sequence IPSSTSEFLP…QAVYESYPQP (152 aa). The Peptidase M14 domain maps to 200 to 522; the sequence is DYQPLSVIIP…NAVLVFGQFL (323 aa). 2 residues coordinate Zn(2+): histidine 265 and glutamate 268. Substrate-binding positions include 265-268, arginine 323, and 340-341; these read HARE and DR. A disulfide bridge connects residues cysteine 334 and cysteine 357. N-linked (GlcNAc...) asparagine glycosylation is found at asparagine 381 and asparagine 387. Histidine 397 contacts Zn(2+). 398–399 contributes to the substrate binding site; it reads SY. Acidic residues predominate over residues 561–571; that stretch reads SNQLEDDDNEN. The segment at 561–582 is disordered; the sequence is SNQLEDDDNENDTLLGFRTQKV. Asparagine 571 is a glycosylation site (N-linked (GlcNAc...) asparagine).

The protein belongs to the peptidase M14 family. Requires Zn(2+) as cofactor.

The protein resides in the vacuole. The protein localises to the secreted. Its function is as follows. Inactive carboxypeptidase that may play a role in cell wall organization and biogenesis. The chain is Inactive metallocarboxypeptidase ECM14 (ECM14) from Coccidioides posadasii (strain C735) (Valley fever fungus).